The primary structure comprises 61 residues: Small ribosomal subunit protein uS14 (61 aa).

Residues cysteine 24, cysteine 27, cysteine 40, and cysteine 43 each coordinate Zn(2+).

The protein belongs to the universal ribosomal protein uS14 family. Zinc-binding uS14 subfamily. Part of the 30S ribosomal subunit. Contacts proteins S3 and S10. Requires Zn(2+) as cofactor.

Its function is as follows. Binds 16S rRNA, required for the assembly of 30S particles and may also be responsible for determining the conformation of the 16S rRNA at the A site. This Nitratidesulfovibrio vulgaris (strain ATCC 29579 / DSM 644 / CCUG 34227 / NCIMB 8303 / VKM B-1760 / Hildenborough) (Desulfovibrio vulgaris) protein is Small ribosomal subunit protein uS14.